Consider the following 178-residue polypeptide: Large ribosomal subunit protein bL25 (178 aa).

Belongs to the bacterial ribosomal protein bL25 family. CTC subfamily. As to quaternary structure, part of the 50S ribosomal subunit; part of the 5S rRNA/L5/L18/L25 subcomplex. Contacts the 5S rRNA. Binds to the 5S rRNA independently of L5 and L18.

This is one of the proteins that binds to the 5S RNA in the ribosome where it forms part of the central protuberance. The polypeptide is Large ribosomal subunit protein bL25 (Campylobacter hominis (strain ATCC BAA-381 / DSM 21671 / CCUG 45161 / LMG 19568 / NCTC 13146 / CH001A)).